The chain runs to 106 residues: Large ribosomal subunit protein uL24 (106 aa).

Positions 84–97 are enriched in basic and acidic residues; sequence EKIGRELGAKEKAR. Residues 84–106 are disordered; sequence EKIGRELGAKEKARLQKRKTAAK.

Belongs to the universal ribosomal protein uL24 family. Part of the 50S ribosomal subunit.

Functionally, one of two assembly initiator proteins, it binds directly to the 5'-end of the 23S rRNA, where it nucleates assembly of the 50S subunit. One of the proteins that surrounds the polypeptide exit tunnel on the outside of the subunit. The protein is Large ribosomal subunit protein uL24 of Anaeromyxobacter dehalogenans (strain 2CP-1 / ATCC BAA-258).